The primary structure comprises 200 residues: Peptidyl-tRNA hydrolase (200 aa).

Y15 lines the tRNA pocket. The active-site Proton acceptor is the H20. TRNA is bound by residues Y66, N68, and N114.

This sequence belongs to the PTH family. As to quaternary structure, monomer.

The protein resides in the cytoplasm. The catalysed reaction is an N-acyl-L-alpha-aminoacyl-tRNA + H2O = an N-acyl-L-amino acid + a tRNA + H(+). In terms of biological role, hydrolyzes ribosome-free peptidyl-tRNAs (with 1 or more amino acids incorporated), which drop off the ribosome during protein synthesis, or as a result of ribosome stalling. Functionally, catalyzes the release of premature peptidyl moieties from peptidyl-tRNA molecules trapped in stalled 50S ribosomal subunits, and thus maintains levels of free tRNAs and 50S ribosomes. In Paraburkholderia phytofirmans (strain DSM 17436 / LMG 22146 / PsJN) (Burkholderia phytofirmans), this protein is Peptidyl-tRNA hydrolase.